The chain runs to 339 residues: 3-isopropylmalate dehydrogenase (339 aa).

The substrate site is built by Arg-88, Arg-98, Arg-122, and Asp-212. Mg(2+) is bound by residues Asp-212, Asp-236, and Asp-240. 272 to 284 contacts NAD(+); sequence GSAPDIAGQGIAD.

Belongs to the isocitrate and isopropylmalate dehydrogenases family. LeuB type 2 subfamily. As to quaternary structure, homodimer. The cofactor is Mg(2+). It depends on Mn(2+) as a cofactor.

The protein resides in the cytoplasm. It carries out the reaction (2R,3S)-3-isopropylmalate + NAD(+) = 4-methyl-2-oxopentanoate + CO2 + NADH. It functions in the pathway amino-acid biosynthesis; L-leucine biosynthesis; L-leucine from 3-methyl-2-oxobutanoate: step 3/4. Its function is as follows. Catalyzes the oxidation of 3-carboxy-2-hydroxy-4-methylpentanoate (3-isopropylmalate) to 3-carboxy-4-methyl-2-oxopentanoate. The product decarboxylates to 4-methyl-2 oxopentanoate. This chain is 3-isopropylmalate dehydrogenase, found in Corynebacterium diphtheriae (strain ATCC 700971 / NCTC 13129 / Biotype gravis).